The chain runs to 471 residues: Argininosuccinate lyase (471 aa).

Belongs to the lyase 1 family. Argininosuccinate lyase subfamily.

Its subcellular location is the cytoplasm. It carries out the reaction 2-(N(omega)-L-arginino)succinate = fumarate + L-arginine. It functions in the pathway amino-acid biosynthesis; L-arginine biosynthesis; L-arginine from L-ornithine and carbamoyl phosphate: step 3/3. In Cereibacter sphaeroides (strain ATCC 17025 / ATH 2.4.3) (Rhodobacter sphaeroides), this protein is Argininosuccinate lyase.